We begin with the raw amino-acid sequence, 154 residues long: Endoribonuclease YbeY (154 aa).

3 residues coordinate Zn(2+): His117, His121, and His127.

It belongs to the endoribonuclease YbeY family. Requires Zn(2+) as cofactor.

It is found in the cytoplasm. Its function is as follows. Single strand-specific metallo-endoribonuclease involved in late-stage 70S ribosome quality control and in maturation of the 3' terminus of the 16S rRNA. The polypeptide is Endoribonuclease YbeY (Polaromonas sp. (strain JS666 / ATCC BAA-500)).